The chain runs to 332 residues: Putative D-threonate 4-phosphate dehydrogenase (332 aa).

Substrate is bound by residues His140 and Thr141. 3 residues coordinate a divalent metal cation: His170, His214, and His270. 3 residues coordinate substrate: Lys278, Asn287, and Arg296.

The protein belongs to the PdxA family. PdxA2 subfamily. In terms of assembly, homodimer. Requires a divalent metal cation as cofactor.

The enzyme catalyses 4-O-phospho-D-threonate + NAD(+) = dihydroxyacetone phosphate + CO2 + NADH. Catalyzes the NAD-dependent oxidation and subsequent decarboxylation of D-threonate 4-phosphate to produce dihydroxyacetone phosphate (DHAP). The chain is Putative D-threonate 4-phosphate dehydrogenase from Oceanobacillus iheyensis (strain DSM 14371 / CIP 107618 / JCM 11309 / KCTC 3954 / HTE831).